Reading from the N-terminus, the 571-residue chain is Proline--tRNA ligase (571 aa).

This sequence belongs to the class-II aminoacyl-tRNA synthetase family. ProS type 1 subfamily. Homodimer.

It is found in the cytoplasm. The enzyme catalyses tRNA(Pro) + L-proline + ATP = L-prolyl-tRNA(Pro) + AMP + diphosphate. Functionally, catalyzes the attachment of proline to tRNA(Pro) in a two-step reaction: proline is first activated by ATP to form Pro-AMP and then transferred to the acceptor end of tRNA(Pro). As ProRS can inadvertently accommodate and process non-cognate amino acids such as alanine and cysteine, to avoid such errors it has two additional distinct editing activities against alanine. One activity is designated as 'pretransfer' editing and involves the tRNA(Pro)-independent hydrolysis of activated Ala-AMP. The other activity is designated 'posttransfer' editing and involves deacylation of mischarged Ala-tRNA(Pro). The misacylated Cys-tRNA(Pro) is not edited by ProRS. This chain is Proline--tRNA ligase, found in Actinobacillus succinogenes (strain ATCC 55618 / DSM 22257 / CCUG 43843 / 130Z).